Consider the following 129-residue polypeptide: Iron-sulfur cluster assembly 1 homolog, mitochondrial (129 aa).

Residues 1–12 (MSASLVRATVRA) constitute a mitochondrion transit peptide. Fe cation is bound by residues C57, C121, and C123.

It belongs to the HesB/IscA family. As to quaternary structure, interacts with CRY2, but not with CRY1 (in vitro).

Its subcellular location is the mitochondrion. In terms of biological role, involved in the maturation of mitochondrial 4Fe-4S proteins functioning late in the iron-sulfur cluster assembly pathway. Probably involved in the binding of an intermediate of Fe/S cluster assembly. The protein is Iron-sulfur cluster assembly 1 homolog, mitochondrial (Isca1) of Rattus norvegicus (Rat).